The sequence spans 602 residues: Elongation factor 4 (602 aa).

The tr-type G domain maps to 2-184 (DHIRNFSIIA…AVIARMPPPK (183 aa)). GTP contacts are provided by residues 14 to 19 (DHGKST) and 131 to 134 (NKMD).

Belongs to the TRAFAC class translation factor GTPase superfamily. Classic translation factor GTPase family. LepA subfamily.

It is found in the cell inner membrane. The catalysed reaction is GTP + H2O = GDP + phosphate + H(+). In terms of biological role, required for accurate and efficient protein synthesis under certain stress conditions. May act as a fidelity factor of the translation reaction, by catalyzing a one-codon backward translocation of tRNAs on improperly translocated ribosomes. Back-translocation proceeds from a post-translocation (POST) complex to a pre-translocation (PRE) complex, thus giving elongation factor G a second chance to translocate the tRNAs correctly. Binds to ribosomes in a GTP-dependent manner. The protein is Elongation factor 4 of Leptothrix cholodnii (strain ATCC 51168 / LMG 8142 / SP-6) (Leptothrix discophora (strain SP-6)).